The primary structure comprises 319 residues: Putative ribose-phosphate pyrophosphokinase 2 (319 aa).

Residues 40 to 42 (DGE) and 99 to 100 (RQ) contribute to the ATP site. His133 serves as a coordination point for Mg(2+). Residues Asp222 and 226 to 230 (NTGRT) each bind D-ribose 5-phosphate.

This sequence belongs to the ribose-phosphate pyrophosphokinase family. Class I subfamily. As to quaternary structure, homohexamer. The cofactor is Mg(2+).

Its subcellular location is the cytoplasm. The enzyme catalyses D-ribose 5-phosphate + ATP = 5-phospho-alpha-D-ribose 1-diphosphate + AMP + H(+). Its pathway is metabolic intermediate biosynthesis; 5-phospho-alpha-D-ribose 1-diphosphate biosynthesis; 5-phospho-alpha-D-ribose 1-diphosphate from D-ribose 5-phosphate (route I): step 1/1. Functionally, involved in the biosynthesis of the central metabolite phospho-alpha-D-ribosyl-1-pyrophosphate (PRPP) via the transfer of pyrophosphoryl group from ATP to 1-hydroxyl of ribose-5-phosphate (Rib-5-P). This chain is Putative ribose-phosphate pyrophosphokinase 2, found in Streptococcus pneumoniae serotype 4 (strain ATCC BAA-334 / TIGR4).